We begin with the raw amino-acid sequence, 337 residues long: Monoacylglycerol lipase abhd6-A (337 aa).

The Extracellular portion of the chain corresponds to 1–19; that stretch reads MDLDVLNMFLVAGGTLLVP. A helical; Signal-anchor for type II membrane protein transmembrane segment spans residues 20-42; the sequence is ILAFVTSFLLWPAALIKIYYWYW. At 43–337 the chain is on the cytoplasmic side; that stretch reads RRALGMQVKF…QSTENNKKHE (295 aa). Positions 73–313 constitute an AB hydrolase-1 domain; that stretch reads SVLMLHGFSA…CGHSVVMERP (241 aa). Ser148 acts as the Nucleophile in catalysis. Active-site charge relay system residues include Asp278 and His306.

It belongs to the AB hydrolase superfamily.

It localises to the late endosome membrane. The protein resides in the lysosome membrane. It is found in the mitochondrion membrane. It carries out the reaction Hydrolyzes glycerol monoesters of long-chain fatty acids.. It catalyses the reaction 1-octanoylglycerol + H2O = octanoate + glycerol + H(+). The catalysed reaction is 1-decanoylglycerol + H2O = decanoate + glycerol + H(+). The enzyme catalyses 1-dodecanoylglycerol + H2O = dodecanoate + glycerol + H(+). It carries out the reaction 1-tetradecanoylglycerol + H2O = tetradecanoate + glycerol + H(+). It catalyses the reaction 2-hexadecanoylglycerol + H2O = glycerol + hexadecanoate + H(+). The catalysed reaction is 2-(9Z-octadecenoyl)-glycerol + H2O = glycerol + (9Z)-octadecenoate + H(+). The enzyme catalyses 1-(9Z-octadecenoyl)-glycerol + H2O = glycerol + (9Z)-octadecenoate + H(+). It carries out the reaction 2-(9Z,12Z-octadecadienoyl)-glycerol + H2O = (9Z,12Z)-octadecadienoate + glycerol + H(+). It catalyses the reaction 2-(5Z,8Z,11Z,14Z-eicosatetraenoyl)-glycerol + H2O = glycerol + (5Z,8Z,11Z,14Z)-eicosatetraenoate + H(+). The catalysed reaction is 1-(5Z,8Z,11Z,14Z-eicosatetraenoyl)-glycerol + H2O = glycerol + (5Z,8Z,11Z,14Z)-eicosatetraenoate + H(+). The enzyme catalyses 1-(9Z,12Z-octadecadienoyl)-glycerol + H2O = (9Z,12Z)-octadecadienoate + glycerol + H(+). It carries out the reaction 3-(9Z-octadecenoyl)-sn-glycero-1-phospho-(3'-(9Z-octadecenoyl)-1'-sn-glycerol) + H2O = 3-(9Z-octadecenoyl)-sn-glycero-1-phospho-(1'-sn-glycerol) + (9Z)-octadecenoate + H(+). It catalyses the reaction (S,S)-2-(9Z-octadecenoyl)-sn-glycero-1-phospho-(2'-(9Z-octadecenoyl)-1'-sn-glycerol) + H2O = (S,S)-2-(9Z-octadecenoyl)-sn-glycero-1-phospho-(1'-sn-glycerol) + (9Z)-octadecenoate + H(+). The catalysed reaction is (R,R)-2-(9Z-octadecenoyl)-sn-glycero-3-phospho-(2'-(9Z-octadecenoyl)-3'-sn-glycerol) + H2O = (R,R)-2-(9Z-octadecenoyl)-sn-glycero-3-phospho-(3'-sn-glycerol) + (9Z)-octadecenoate + H(+). In terms of biological role, lipase that preferentially hydrolysis medium-chain saturated monoacylglycerols including 2-arachidonoylglycerol. Through 2-arachidonoylglycerol degradation may regulate endocannabinoid signaling pathways. Also has a lysophosphatidyl lipase activity with a preference for lysophosphatidylglycerol among other lysophospholipids. Also able to degrade bis(monoacylglycero)phosphate (BMP) and constitutes the major enzyme for BMP catabolism. BMP, also known as lysobisphosphatidic acid, is enriched in late endosomes and lysosomes and plays a key role in the formation of intraluminal vesicles and in lipid sorting. The polypeptide is Monoacylglycerol lipase abhd6-A (abhd6-a) (Xenopus laevis (African clawed frog)).